We begin with the raw amino-acid sequence, 180 residues long: LQTGRLFPETLKLIDETENQYDIRISRYEPEQADIDAYAEKYGLNGFYESVEARHACCGVRKLKPLARALSGATIWVTGLRRGQSANRADTPFAEYDPERNLIKVNPLADWDIDVIRAYVADNGVPVNPLHQRGYPSIGCEPCTRAIKPGEPERAGRWWWENDEKRECGLHVHEEAAAAQ.

Cys-57, Cys-58, Cys-140, and Cys-143 together coordinate [4Fe-4S] cluster. The active-site Nucleophile; cysteine thiosulfonate intermediate is Cys-168.

Belongs to the PAPS reductase family. CysH subfamily. Requires [4Fe-4S] cluster as cofactor.

It localises to the cytoplasm. The catalysed reaction is [thioredoxin]-disulfide + sulfite + AMP + 2 H(+) = adenosine 5'-phosphosulfate + [thioredoxin]-dithiol. It functions in the pathway sulfur metabolism; hydrogen sulfide biosynthesis; sulfite from sulfate. Functionally, catalyzes the formation of sulfite from adenosine 5'-phosphosulfate (APS) using thioredoxin as an electron donor. The protein is Adenosine 5'-phosphosulfate reductase of Rhizobium tropici.